The sequence spans 79 residues: D-alanyl carrier protein (79 aa).

The region spanning 1 to 77 (MDVKAEVIEI…KIVEGVTELR (77 aa)) is the Carrier domain. Serine 35 carries the O-(pantetheine 4'-phosphoryl)serine modification.

It belongs to the DltC family. 4'-phosphopantetheine is transferred from CoA to a specific serine of apo-DCP.

It is found in the cytoplasm. It functions in the pathway cell wall biogenesis; lipoteichoic acid biosynthesis. Its function is as follows. Carrier protein involved in the D-alanylation of lipoteichoic acid (LTA). The loading of thioester-linked D-alanine onto DltC is catalyzed by D-alanine--D-alanyl carrier protein ligase DltA. The DltC-carried D-alanyl group is further transferred to cell membrane phosphatidylglycerol (PG) by forming an ester bond, probably catalyzed by DltD. D-alanylation of LTA plays an important role in modulating the properties of the cell wall in Gram-positive bacteria, influencing the net charge of the cell wall. The chain is D-alanyl carrier protein from Streptococcus gordonii (strain Challis / ATCC 35105 / BCRC 15272 / CH1 / DL1 / V288).